Here is a 245-residue protein sequence, read N- to C-terminus: tRNA pseudouridine synthase A (245 aa).

Asp52 acts as the Nucleophile in catalysis. Position 111 (Tyr111) interacts with substrate.

It belongs to the tRNA pseudouridine synthase TruA family. In terms of assembly, homodimer.

The enzyme catalyses uridine(38/39/40) in tRNA = pseudouridine(38/39/40) in tRNA. Formation of pseudouridine at positions 38, 39 and 40 in the anticodon stem and loop of transfer RNAs. The sequence is that of tRNA pseudouridine synthase A from Thermotoga maritima (strain ATCC 43589 / DSM 3109 / JCM 10099 / NBRC 100826 / MSB8).